A 208-amino-acid chain; its full sequence is Small ribosomal subunit protein uS3 (208 aa).

Positions 38-106 constitute a KH type-2 domain; it reads IRDYIKARLY…EILIDIQEVR (69 aa).

The protein belongs to the universal ribosomal protein uS3 family. As to quaternary structure, part of the 30S ribosomal subunit. Forms a tight complex with proteins S10 and S14.

Functionally, binds the lower part of the 30S subunit head. Binds mRNA in the 70S ribosome, positioning it for translation. This is Small ribosomal subunit protein uS3 from Syntrophobacter fumaroxidans (strain DSM 10017 / MPOB).